We begin with the raw amino-acid sequence, 490 residues long: Glycine--tRNA ligase (490 aa).

Residues arginine 99 and glutamate 163 each contribute to the substrate site. Residues 195 to 197 (RNE), 205 to 210 (FRTREF), 282 to 283 (EL), and 326 to 329 (GLTR) contribute to the ATP site. 210 to 214 (FEQME) lines the substrate pocket. 322-326 (EPAAG) lines the substrate pocket. The segment at 470 to 490 (PVEMGGEPWPESGVQEAGGLY) is disordered.

This sequence belongs to the class-II aminoacyl-tRNA synthetase family. Homodimer.

The protein localises to the cytoplasm. It carries out the reaction tRNA(Gly) + glycine + ATP = glycyl-tRNA(Gly) + AMP + diphosphate. Functionally, catalyzes the attachment of glycine to tRNA(Gly). The chain is Glycine--tRNA ligase from Bifidobacterium longum (strain NCC 2705).